Reading from the N-terminus, the 599-residue chain is Calcium-dependent protein kinase 10 (599 aa).

The N-myristoyl glycine moiety is linked to residue G2. Residues 27–110 (RQDGDDALPG…PRPRVPPVKR (84 aa)) are disordered. Residues 74 to 84 (VSTTDTASAEQ) are compositionally biased toward polar residues. Low complexity predominate over residues 87–98 (SKSSAGSDSGEA). The Protein kinase domain occupies 133–391 (YSLGRKLGQG…AHEVLRHPWV (259 aa)). ATP is bound by residues 139 to 147 (LGQGQFGTT) and K162. Residue D257 is the Proton acceptor of the active site. The segment at 397–427 (APDKPLDSAVLSRMKQFSAMNKLKKMALRVI) is autoinhibitory domain. 4 consecutive EF-hand domains span residues 434 to 469 (DEIAGLKEMFKMIDTDNSGQITFEELKVGLKKVGAN), 470 to 505 (LQESEIYALMQAADVDNSGTIDYGEFIAATLHMNKI), 506 to 541 (EREDHLFAAFQYFDKDGSGYITADELQLACEEFGLG), and 544 to 575 (QLEEMIREVDEDNDGRIDYNEFVAMMQKPTMG). 20 residues coordinate Ca(2+): D447, D449, S451, Q453, E458, D483, D485, S487, T489, E494, D519, D521, S523, Y525, E530, D553, D555, D557, R559, and E564.

It belongs to the protein kinase superfamily. Ser/Thr protein kinase family. CDPK subfamily. Expressed in roots.

The protein localises to the membrane. The catalysed reaction is L-seryl-[protein] + ATP = O-phospho-L-seryl-[protein] + ADP + H(+). It carries out the reaction L-threonyl-[protein] + ATP = O-phospho-L-threonyl-[protein] + ADP + H(+). With respect to regulation, activated by calcium. Autophosphorylation may play an important role in the regulation of the kinase activity. Functionally, may play a role in signal transduction pathways that involve calcium as a second messenger. This chain is Calcium-dependent protein kinase 10, found in Oryza sativa subsp. japonica (Rice).